A 181-amino-acid polypeptide reads, in one-letter code: Thioredoxin-like protein CITRX1, chloroplastic (181 aa).

The segment at 1-20 (MQAATLSFHPSAPPPQTSAC) is disordered. The transit peptide at 1-70 (MQAATLSFHP…PAVATGKYVR (70 aa)) directs the protein to the chloroplast. A Thioredoxin domain is found at 71-181 (EDYLVKKVSA…MMRDIINNDL (111 aa)). Catalysis depends on nucleophile residues cysteine 104 and cysteine 107. The cysteines at positions 104 and 107 are disulfide-linked.

This sequence belongs to the thioredoxin family. Plant CITRX-type subfamily.

It localises to the plastid. Its subcellular location is the chloroplast. Probable thiol-disulfide oxidoreductase that may play a role in proper chloroplast development. The polypeptide is Thioredoxin-like protein CITRX1, chloroplastic (Nicotiana benthamiana).